A 311-amino-acid chain; its full sequence is Elongation factor Ts (311 aa).

The interval 81–84 (TDFV) is involved in Mg(2+) ion dislocation from EF-Tu.

This sequence belongs to the EF-Ts family.

It localises to the cytoplasm. Its function is as follows. Associates with the EF-Tu.GDP complex and induces the exchange of GDP to GTP. It remains bound to the aminoacyl-tRNA.EF-Tu.GTP complex up to the GTP hydrolysis stage on the ribosome. This is Elongation factor Ts from Trichlorobacter lovleyi (strain ATCC BAA-1151 / DSM 17278 / SZ) (Geobacter lovleyi).